The following is a 188-amino-acid chain: Elongation factor P (188 aa).

The residue at position 34 (Lys-34) is an N6-(3,6-diaminohexanoyl)-5-hydroxylysine.

The protein belongs to the elongation factor P family. May be beta-lysylated on the epsilon-amino group of Lys-34 by the combined action of EpmA and EpmB, and then hydroxylated on the C5 position of the same residue by EpmC (if this protein is present). Lysylation is critical for the stimulatory effect of EF-P on peptide-bond formation. The lysylation moiety may extend toward the peptidyltransferase center and stabilize the terminal 3-CCA end of the tRNA. Hydroxylation of the C5 position on Lys-34 may allow additional potential stabilizing hydrogen-bond interactions with the P-tRNA.

The protein localises to the cytoplasm. It functions in the pathway protein biosynthesis; polypeptide chain elongation. Its function is as follows. Involved in peptide bond synthesis. Alleviates ribosome stalling that occurs when 3 or more consecutive Pro residues or the sequence PPG is present in a protein, possibly by augmenting the peptidyl transferase activity of the ribosome. Modification of Lys-34 is required for alleviation. In Stenotrophomonas maltophilia (strain K279a), this protein is Elongation factor P.